The following is a 619-amino-acid chain: Chaperone protein HscA homolog (619 aa).

It belongs to the heat shock protein 70 family.

In terms of biological role, chaperone involved in the maturation of iron-sulfur cluster-containing proteins. Has a low intrinsic ATPase activity which is markedly stimulated by HscB. The polypeptide is Chaperone protein HscA homolog (Chromobacterium violaceum (strain ATCC 12472 / DSM 30191 / JCM 1249 / CCUG 213 / NBRC 12614 / NCIMB 9131 / NCTC 9757 / MK)).